Here is a 110-residue protein sequence, read N- to C-terminus: Small heat shock protein hspG11 (110 aa).

Positions K30–R110 constitute a sHSP domain. The interval K78 to R110 is disordered. Residues N85 to N96 are compositionally biased toward low complexity. Polar residues predominate over residues K101 to R110.

This sequence belongs to the small heat shock protein (HSP20) family.

This is Small heat shock protein hspG11 (hspG11) from Dictyostelium discoideum (Social amoeba).